The chain runs to 419 residues: Gamma-glutamyl phosphate reductase (419 aa).

It belongs to the gamma-glutamyl phosphate reductase family.

Its subcellular location is the cytoplasm. It carries out the reaction L-glutamate 5-semialdehyde + phosphate + NADP(+) = L-glutamyl 5-phosphate + NADPH + H(+). It functions in the pathway amino-acid biosynthesis; L-proline biosynthesis; L-glutamate 5-semialdehyde from L-glutamate: step 2/2. Catalyzes the NADPH-dependent reduction of L-glutamate 5-phosphate into L-glutamate 5-semialdehyde and phosphate. The product spontaneously undergoes cyclization to form 1-pyrroline-5-carboxylate. The sequence is that of Gamma-glutamyl phosphate reductase from Azoarcus sp. (strain BH72).